A 212-amino-acid polypeptide reads, in one-letter code: Thymidylate kinase (212 aa).

Residue 10-17 (GLEGAGKT) participates in ATP binding.

Belongs to the thymidylate kinase family.

It carries out the reaction dTMP + ATP = dTDP + ADP. In terms of biological role, phosphorylation of dTMP to form dTDP in both de novo and salvage pathways of dTTP synthesis. The protein is Thymidylate kinase of Baumannia cicadellinicola subsp. Homalodisca coagulata.